The following is a 783-amino-acid chain: Protein transport protein SEC23 B (783 aa).

Cys59, Cys62, Cys81, and Cys84 together coordinate Zn(2+). The segment at 59-84 is zinc finger-like; sequence CRICTAALNPFARVDFLAKIWICPIC.

Belongs to the SEC23/SEC24 family. SEC23 subfamily. As to quaternary structure, component of the coat protein complex II (COPII), composed of at least five proteins: the Sec23/24 complex, the Sec13/31 complex and Sar1. Interacts with SEC24A.

The protein resides in the cytoplasmic vesicle. It is found in the COPII-coated vesicle membrane. It localises to the endoplasmic reticulum membrane. The protein localises to the membrane. Functionally, component of the coat protein complex II (COPII) which promotes the formation of transport vesicles from the endoplasmic reticulum (ER). The coat has two main functions, the physical deformation of the endoplasmic reticulum membrane into vesicles and the selection of cargo molecules. The sequence is that of Protein transport protein SEC23 B from Arabidopsis thaliana (Mouse-ear cress).